The sequence spans 442 residues: tRNA pseudouridine(38/39) synthase (442 aa).

The active-site Nucleophile is Asp151. Tyr222 lines the substrate pocket.

The protein belongs to the tRNA pseudouridine synthase TruA family.

It is found in the nucleus. It catalyses the reaction uridine(38/39) in tRNA = pseudouridine(38/39) in tRNA. Formation of pseudouridines at positions 38 and 39 in the anticodon stem and loop of transfer RNAs. This chain is tRNA pseudouridine(38/39) synthase (DEG1), found in Saccharomyces cerevisiae (strain ATCC 204508 / S288c) (Baker's yeast).